A 62-amino-acid polypeptide reads, in one-letter code: Short neurotoxin 1 (62 aa).

Residues 1 to 20 form a disordered region; that stretch reads LECHNQQSSEPPTTTRCSGG. Disulfide bonds link cysteine 3/cysteine 24, cysteine 17/cysteine 41, cysteine 43/cysteine 54, and cysteine 55/cysteine 60.

The protein belongs to the three-finger toxin family. Short-chain subfamily. Type I alpha-neurotoxin sub-subfamily. Expressed by the venom gland.

It is found in the secreted. Its function is as follows. Binds to muscle nicotinic acetylcholine receptor (nAChR) and inhibit acetylcholine from binding to the receptor, thereby impairing neuromuscular transmission. The sequence is that of Short neurotoxin 1 from Naja mossambica (Mozambique spitting cobra).